Consider the following 288-residue polypeptide: SUR7 family protein pun1 (288 aa).

The Cytoplasmic portion of the chain corresponds to 1-11 (MGMGFNPIKAL). Residues 12–32 (FTGIGTVCVGVGALLSILCII) traverse the membrane as a helical segment. N-linked (GlcNAc...) asparagine glycosylation is found at Asn-33, Asn-50, Asn-59, Asn-66, Asn-122, Asn-153, and Asn-160. At 33 to 185 (NQTQHNIAFQ…GACYAMRAMY (153 aa)) the chain is on the extracellular side. Residues 186 to 206 (ILGFIFFALTIVSIVISCLPF) form a helical membrane-spanning segment. Residues 207–210 (FGPL) lie on the Cytoplasmic side of the membrane. Residues 211 to 231 (FLNVFSFFATIFTFIAAVIAV) traverse the membrane as a helical segment. At 232–257 (ATYRIAISELEKNIEILNIPIVLGKK) the chain is on the extracellular side. The chain crosses the membrane as a helical span at residues 258 to 278 (IYAYSFLSAAAGLAACILYFI). The Cytoplasmic portion of the chain corresponds to 279–288 (GNLTSGYSPL).

The protein belongs to the SUR7 family.

Its subcellular location is the golgi apparatus membrane. The protein resides in the cell membrane. The protein localises to the cell tip. Its function is as follows. Contributes to the wild-type cellular response to nitrogen stress through signaling pathways that regulate the expression of genes involved in amino acid biosynthesis. Required for wild-type filamentous growth, cell growth, and cell-cell adhesion. This is SUR7 family protein pun1 (pun1) from Schizosaccharomyces pombe (strain 972 / ATCC 24843) (Fission yeast).